Consider the following 116-residue polypeptide: Phage-like element PBSX protein XkdD (116 aa).

This Bacillus subtilis (strain 168) protein is Phage-like element PBSX protein XkdD (xkdD).